An 807-amino-acid polypeptide reads, in one-letter code: Centrosomal protein of 97 kDa (807 aa).

LRR repeat units lie at residues 34-55 (DTQTLILDKNQIIKLEHVEKCR), 56-77 (NLVQLSVANNRLVRMMGVAKLI), 78-99 (HLRVLNLPHNSIGYVEGLKDLV), 100-121 (HLEWINLAGNNLKIIDQINSST), 122-143 (SLQHLDLSDNNISQIGDLSKLK), 144-165 (SLKTLLLHGNNIASLRAASACL), and 168-189 (SLTILSLAENEIRDLNEVAFLA). One can recognise an LRRCT domain in the interval 208–246 (TPSIPGFDYRPFIVSWCLNLKVLDGYVVSQKESLKAEWL). The segment at 306-330 (RSDGYLTSSTPNKRLPLSTEHHSPT) is disordered. Positions 519 to 548 (ISKAATKLQSCWRGFYARKYNPKVKDVCYE) constitute an IQ domain. Positions 607–623 (TANSSENDLPSASNSKH) are enriched in polar residues. The interval 607–756 (TANSSENDLP…RPEITTCSDN (150 aa)) is disordered. Residues 681–690 (TGRHYNDKVP) show a composition bias toward basic and acidic residues. Residues 704-724 (SQSSKDSFTSEQDSSLLQQYL) are compositionally biased toward polar residues.

The protein localises to the cytoplasm. The protein resides in the cytoskeleton. Its subcellular location is the microtubule organizing center. It is found in the centrosome. Its function is as follows. Acts as a key negative regulator of ciliogenesis in collaboration with ccp110 by capping the mother centriole thereby preventing cilia formation. Required for recruitment of ccp110 to the centrosome. The chain is Centrosomal protein of 97 kDa (cep97) from Xenopus laevis (African clawed frog).